The chain runs to 302 residues: Probable alpha-L-glutamate ligase (302 aa).

One can recognise an ATP-grasp domain in the interval 105 to 288; sequence LQLLARKGIP…LAGKIIEYIE (184 aa). Residues Lys142, 179 to 180, Asp188, and 212 to 214 contribute to the ATP site; these read EF and RAN. Asp249, Glu261, and Asn263 together coordinate Mg(2+). Mn(2+) is bound by residues Asp249, Glu261, and Asn263.

This sequence belongs to the RimK family. It depends on Mg(2+) as a cofactor. Mn(2+) is required as a cofactor.

This is Probable alpha-L-glutamate ligase from Legionella pneumophila (strain Paris).